The primary structure comprises 591 residues: Aspartate--tRNA ligase (591 aa).

L-aspartate is bound at residue Glu-173. The segment at 197–200 is aspartate; that stretch reads QLFK. Arg-219 provides a ligand contact to L-aspartate. ATP-binding positions include 219–221 and Gln-228; that span reads RDE. Residue His-448 participates in L-aspartate binding. An ATP-binding site is contributed by Glu-482. Position 489 (Arg-489) interacts with L-aspartate. 534-537 contributes to the ATP binding site; the sequence is GLDR.

Belongs to the class-II aminoacyl-tRNA synthetase family. Type 1 subfamily. In terms of assembly, homodimer.

Its subcellular location is the cytoplasm. It carries out the reaction tRNA(Asp) + L-aspartate + ATP = L-aspartyl-tRNA(Asp) + AMP + diphosphate. Functionally, catalyzes the attachment of L-aspartate to tRNA(Asp) in a two-step reaction: L-aspartate is first activated by ATP to form Asp-AMP and then transferred to the acceptor end of tRNA(Asp). This Shewanella sp. (strain ANA-3) protein is Aspartate--tRNA ligase.